Here is a 255-residue protein sequence, read N- to C-terminus: MTGTPLLSFEPLTEGILLKRYKRFLADIELEDGSCVTAHCANTGPMTGVLIPGQRVRLRHAPSPTRKLAWTWEQAEVPGADGQLCWVGINTALPNRLIRATIEAGCLREQLGEIESIRAEVVYGKNRKSRIDLLLQPSREAIDQRPIYVEVKNTTWSTGSTALFPDTVTTRGQKHLQELMDVLPEARAVLIPCLSRPDVTAFAPGDSADPRYGELFRNALDAGVEVLPCCFRFDRDGVTWQGTRPAQGQQPSAAL.

The protein belongs to the SfsA family.

This is Sugar fermentation stimulation protein homolog from Synechococcus sp. (strain WH7803).